A 1024-amino-acid chain; its full sequence is SWI/SNF-related matrix-associated actin-dependent regulator of chromatin subfamily A containing DEAD/H box 1 (1024 aa).

M1 is subject to N-acetylmethionine. The interval 1 to 83 (MNLFNLDRFR…NESKASLSCF (83 aa)) is disordered. The span at 7–19 (DRFRFEKRSKIEE) shows a compositional bias: basic and acidic residues. T54 carries the phosphothreonine modification. S57 carries the post-translational modification Phosphoserine. Residue K77 forms a Glycyl lysine isopeptide (Lys-Gly) (interchain with G-Cter in SUMO2) linkage. 6 positions are modified to phosphoserine: S79, S124, S127, S132, S145, and S151. The CUE 1 domain occupies 156 to 198 (LKDAKLQTLKELFPQRSDSDLLKLIDSTSTMDGAIAAALLKFG). The interval 201–250 (GGGPRKRKLSSSSEAYEEDEANDDQSLKKPRGDRREESNESAEASSNWEK) is disordered. 2 positions are modified to phosphoserine: S210 and S213. Position 216 is a phosphotyrosine (Y216). Phosphoserine occurs at positions 238 and 241. In terms of domain architecture, CUE 2 spans 250–293 (KQESIVLKLQKEFPNFDKQELREVLKEHEWMYTEALESLKVFAE). S301 is subject to Phosphoserine. Residues 331 to 369 (SMKPQNGFNKKRKKNVFNPKKAVEDSEYDSGSDAGSSLD) form a disordered region. Glycyl lysine isopeptide (Lys-Gly) (interchain with G-Cter in SUMO2) cross-links involve residues K333 and K469. A Helicase ATP-binding domain is found at 507-675 (ALVHKHGLNG…MSLLNFVMPH (169 aa)). 519 to 527 (ADEMGLGKT) is an ATP binding site. A DEGH box motif is present at residues 626-629 (DEGH). The Nuclear localization signal signature appears at 719-736 (RRVKEEVLKLLPPKKDQI). K722 is covalently cross-linked (Glycyl lysine isopeptide (Lys-Gly) (interchain with G-Cter in SUMO2)). The Helicase C-terminal domain maps to 856–1008 (TLGCILSELK…MTTVDEADEG (153 aa)). 895 to 902 (YLRLDGKT) contributes to the ATP binding site. A Glycyl lysine isopeptide (Lys-Gly) (interchain with G-Cter in SUMO2) cross-link involves residue K994. The DEAD box signature appears at 1003-1006 (DEAD).

The protein belongs to the SNF2/RAD54 helicase family. In terms of assembly, binds to DNA preferentially in the vicinity of transcriptional start sites. Interacts with MSH2 and TRIM28. Part of a complex composed of TRIM28, HDAC1, HDAC2 and EHMT2. Interacts with PCNA.

It is found in the nucleus. Its subcellular location is the chromosome. It carries out the reaction ATP + H2O = ADP + phosphate + H(+). Functionally, DNA helicase that possesses intrinsic ATP-dependent nucleosome-remodeling activity and is both required for DNA repair and heterochromatin organization. Promotes DNA end resection of double-strand breaks (DSBs) following DNA damage: probably acts by weakening histone DNA interactions in nucleosomes flanking DSBs. Required for the restoration of heterochromatin organization after replication. Acts at replication sites to facilitate the maintenance of heterochromatin by directing H3 and H4 histones deacetylation, H3 'Lys-9' trimethylation (H3K9me3) and restoration of silencing. The sequence is that of SWI/SNF-related matrix-associated actin-dependent regulator of chromatin subfamily A containing DEAD/H box 1 (Smarcad1) from Rattus norvegicus (Rat).